Reading from the N-terminus, the 520-residue chain is Developmental regulatory protein wetA (520 aa).

Disordered regions lie at residues 110–149, 260–294, 388–453, and 471–496; these read ATHALSTSPSTPPATPRRKPTQSALITPKSIRHRCPNERR, HPSSSTLTNSSPSSADDMFSSSHSSDPHSLSSWQS, TTSQ…GSNK, and LTGVAPSGSSKTKARREQEARDRRRK. Positions 261 to 294 are enriched in low complexity; the sequence is PSSSTLTNSSPSSADDMFSSSHSSDPHSLSSWQS. Polar residues predominate over residues 388 to 401; sequence TTSQVHNVSRSPSL. The segment covering 420 to 429 has biased composition (basic residues); it reads PVHRRTHSRK. Over residues 436 to 453 the composition is skewed to low complexity; the sequence is NAPKPAKASGSSSRGSNK.

Belongs to the wetA family.

Functionally, brlA, abaA and wetA are pivotal regulators of conidiophore development and conidium maturation. They act individually and together to regulate their own expression and that of numerous other sporulation-specific genes. Plays a crucial role in pigmentation and conidial cell wall integrity. The protein is Developmental regulatory protein wetA of Penicillium digitatum (strain PHI26 / CECT 20796) (Green mold).